A 421-amino-acid polypeptide reads, in one-letter code: ATP-dependent RNA helicase RhlB (421 aa).

The Q motif signature appears at 9-37; that stretch reads QKFSDFALHPKVVEVLEKKGFHNCTPIQA. Residues 40–219 form the Helicase ATP-binding domain; the sequence is LPLTLAGRDV…FEQMNNAEYI (180 aa). 53 to 60 provides a ligand contact to ATP; the sequence is AQTGTGKT. Residues 165 to 168 carry the DEAD box motif; it reads DEAD. One can recognise a Helicase C-terminal domain in the interval 245-390; it reads RLLQTLIEEE…VSKYNPDALM (146 aa). The interval 392 to 421 is disordered; sequence DLPKPLRLTRPRTGNGPRRTGAPRNRRRSG. Over residues 402–414 the composition is skewed to low complexity; sequence PRTGNGPRRTGAP.

Belongs to the DEAD box helicase family. RhlB subfamily. In terms of assembly, component of the RNA degradosome, which is a multiprotein complex involved in RNA processing and mRNA degradation.

Its subcellular location is the cytoplasm. It catalyses the reaction ATP + H2O = ADP + phosphate + H(+). Its function is as follows. DEAD-box RNA helicase involved in RNA degradation. Has RNA-dependent ATPase activity and unwinds double-stranded RNA. This chain is ATP-dependent RNA helicase RhlB, found in Shigella boydii serotype 18 (strain CDC 3083-94 / BS512).